A 286-amino-acid polypeptide reads, in one-letter code: ATP synthase gamma chain (286 aa).

The protein belongs to the ATPase gamma chain family. F-type ATPases have 2 components, CF(1) - the catalytic core - and CF(0) - the membrane proton channel. CF(1) has five subunits: alpha(3), beta(3), gamma(1), delta(1), epsilon(1). CF(0) has three main subunits: a, b and c.

It is found in the cell inner membrane. Its function is as follows. Produces ATP from ADP in the presence of a proton gradient across the membrane. The gamma chain is believed to be important in regulating ATPase activity and the flow of protons through the CF(0) complex. The sequence is that of ATP synthase gamma chain from Teredinibacter turnerae (strain ATCC 39867 / T7901).